The following is an 88-amino-acid chain: UPF0213 protein SAG0778 (88 aa).

In terms of domain architecture, GIY-YIG spans 4–80 (VPAYMYVLEC…QKTRQAKLTY (77 aa)).

This sequence belongs to the UPF0213 family.

The polypeptide is UPF0213 protein SAG0778 (Streptococcus agalactiae serotype V (strain ATCC BAA-611 / 2603 V/R)).